Consider the following 255-residue polypeptide: Thiazole synthase (255 aa).

The active-site Schiff-base intermediate with DXP is Lys96. 1-deoxy-D-xylulose 5-phosphate is bound by residues Gly157, 183–184, and 205–206; these read AG and NS.

Belongs to the ThiG family. In terms of assembly, homotetramer. Forms heterodimers with either ThiH or ThiS.

The protein localises to the cytoplasm. The catalysed reaction is [ThiS sulfur-carrier protein]-C-terminal-Gly-aminoethanethioate + 2-iminoacetate + 1-deoxy-D-xylulose 5-phosphate = [ThiS sulfur-carrier protein]-C-terminal Gly-Gly + 2-[(2R,5Z)-2-carboxy-4-methylthiazol-5(2H)-ylidene]ethyl phosphate + 2 H2O + H(+). The protein operates within cofactor biosynthesis; thiamine diphosphate biosynthesis. Its function is as follows. Catalyzes the rearrangement of 1-deoxy-D-xylulose 5-phosphate (DXP) to produce the thiazole phosphate moiety of thiamine. Sulfur is provided by the thiocarboxylate moiety of the carrier protein ThiS. In vitro, sulfur can be provided by H(2)S. This is Thiazole synthase from Exiguobacterium sibiricum (strain DSM 17290 / CCUG 55495 / CIP 109462 / JCM 13490 / 255-15).